The sequence spans 1166 residues: DEAD-box ATP-dependent RNA helicase 42 (1166 aa).

Composition is skewed to basic and acidic residues over residues 1 to 12 (MEVEKSKYRSED) and 21 to 45 (DLKKSRRDRDRSNERKKDKGSEKRR). Residues 1 to 460 (MEVEKSKYRS…NDDDPSLDED (460 aa)) form a disordered region. Residues 14–95 (DVVEEEADLK…KDRVKRRSER (82 aa)) adopt a coiled-coil conformation. Residues 59–70 (SEDDYDRDDDEE) are compositionally biased toward acidic residues. Residues 80 to 95 (ERRRRDKDRVKRRSER) are compositionally biased toward basic residues. The segment covering 101–110 (SEDDVEEEDE) has biased composition (acidic residues). The segment covering 111–206 (RDKRRVNEKE…RERERSREVG (96 aa)) has biased composition (basic and acidic residues). The stretch at 130–302 (RGKDRKRDRE…KRKKEEAESE (173 aa)) forms a coiled coil. Ser-210 is subject to Phosphoserine. The span at 224–314 (EGGERKEKER…GDADGNEPKA (91 aa)) shows a compositional bias: basic and acidic residues. Residue Ser-324 is modified to Phosphoserine. Basic and acidic residues-rich tracts occupy residues 344 to 357 (ETKPENDGDAKMVD) and 416 to 426 (MNGKESGDRPK). The Q motif motif lies at 529-557 (KFWHQTGLTSKILDTMKKLNYEKPMPIQT). The Helicase ATP-binding domain occupies 560-738 (LPIIMSGRDC…RKVLNKPVEI (179 aa)). 573-580 (AKTGSGKT) contacts ATP. The DEAD box motif lies at 686-689 (DEAD). The Helicase C-terminal domain occupies 749-910 (DITQLVEVRP…PVPDDLKALA (162 aa)).

It belongs to the DEAD box helicase family. DDX46/PRP5 subfamily.

It localises to the nucleus. It carries out the reaction ATP + H2O = ADP + phosphate + H(+). Functionally, helicase required for pre-mRNA splicing, cold-responsive gene regulation and cold tolerance. In Arabidopsis thaliana (Mouse-ear cress), this protein is DEAD-box ATP-dependent RNA helicase 42 (RH42).